The chain runs to 354 residues: Uroporphyrinogen decarboxylase (354 aa).

Substrate-binding positions include 27–31 (RQAGR), Asp-77, Tyr-154, Ser-209, and His-327.

This sequence belongs to the uroporphyrinogen decarboxylase family. Homodimer.

Its subcellular location is the cytoplasm. The enzyme catalyses uroporphyrinogen III + 4 H(+) = coproporphyrinogen III + 4 CO2. Its pathway is porphyrin-containing compound metabolism; protoporphyrin-IX biosynthesis; coproporphyrinogen-III from 5-aminolevulinate: step 4/4. Functionally, catalyzes the decarboxylation of four acetate groups of uroporphyrinogen-III to yield coproporphyrinogen-III. This Shewanella loihica (strain ATCC BAA-1088 / PV-4) protein is Uroporphyrinogen decarboxylase.